A 306-amino-acid chain; its full sequence is MDLSVELFGIRFKNPVWVASGTFGYGVEAAEIYDISKLGAVVTKGLSLKERLGNETPRIVETPCGMLNSIGLQNPGVEKFLKEIYPKIKDVDTHFIANVFGETEEEYVEVCMALEDADKIVAYELNVSCPNVKKGGILFGHDPVILGNLVDRIKAKIKKPLLVKLSPNVTDVTEFAKVCIENGADGLVLINTLMGMKINIWKRKPDLATKTGGLSGPAILPIAVRMIYQVYEKFGDRIPIIGVGGITTWEDAMEHVMAGASAVQVGTANFYEPLAPLKVIEGIENFMKSQNIKDFKELIGIAHRVE.

FMN is bound by residues Ser-20 and 44–45 (KG). Substrate contacts are provided by residues Lys-44 and 68–72 (NSIGL). FMN contacts are provided by Asn-98 and Asn-126. Asn-126 contributes to the substrate binding site. Cys-129 acts as the Nucleophile in catalysis. The FMN site is built by Lys-164 and Ile-190. Residue 191–192 (NT) coordinates substrate. Residues Gly-216, 244-245 (GG), and 266-267 (GT) each bind FMN.

The protein belongs to the dihydroorotate dehydrogenase family. Type 1 subfamily. In terms of assembly, homodimer. It depends on FMN as a cofactor.

It localises to the cytoplasm. It carries out the reaction (S)-dihydroorotate + fumarate = orotate + succinate. Its pathway is pyrimidine metabolism; UMP biosynthesis via de novo pathway. Catalyzes the conversion of dihydroorotate to orotate with fumarate as the electron acceptor. This Aquifex aeolicus (strain VF5) protein is Putative dihydroorotate dehydrogenase A (fumarate) (pyrD).